The chain runs to 382 residues: SPRY domain-containing protein C285.10c (382 aa).

Residues 21-41 (LAILFIFIALAAVIVLLICLL) form a helical membrane-spanning segment. Residues 79 to 284 (GFSLLDDMGK…LHVNLGQAGY (206 aa)) enclose the B30.2/SPRY domain. The disordered stretch occupies residues 304–382 (APPPSYSTSQ…MHSMPATDEV (79 aa)). Composition is skewed to polar residues over residues 309–334 (YSTS…QGDT) and 361–372 (FSPSSSNNQAYQ).

It is found in the cytoplasm. The protein resides in the membrane. In Schizosaccharomyces pombe (strain 972 / ATCC 24843) (Fission yeast), this protein is SPRY domain-containing protein C285.10c.